The chain runs to 177 residues: Ribosome maturation factor RimP (177 aa).

Belongs to the RimP family.

It is found in the cytoplasm. Functionally, required for maturation of 30S ribosomal subunits. The protein is Ribosome maturation factor RimP of Methylibium petroleiphilum (strain ATCC BAA-1232 / LMG 22953 / PM1).